The primary structure comprises 723 residues: Polyribonucleotide nucleotidyltransferase (723 aa).

Residues Asp497 and Asp503 each coordinate Mg(2+). The KH domain maps to 564 to 623 (PRLLSFRIDPELIGTVIGPGGRTIKGITERTNTKIDIEDGGIVTIASHDGAAAEAAQRII). Positions 633-701 (GEVFTGTITR…NRGRINLTLR (69 aa)) constitute an S1 motif domain. The segment at 701-723 (RGVPQNGEETQSEPAPTPVAPLN) is disordered.

The protein belongs to the polyribonucleotide nucleotidyltransferase family. Mg(2+) serves as cofactor.

It is found in the cytoplasm. It catalyses the reaction RNA(n+1) + phosphate = RNA(n) + a ribonucleoside 5'-diphosphate. Functionally, involved in mRNA degradation. Catalyzes the phosphorolysis of single-stranded polyribonucleotides processively in the 3'- to 5'-direction. The polypeptide is Polyribonucleotide nucleotidyltransferase (Prochlorococcus marinus (strain MIT 9313)).